Here is a 487-residue protein sequence, read N- to C-terminus: Betaine aldehyde dehydrogenase (487 aa).

Residues isoleucine 27 and aspartate 93 each coordinate K(+). Residue glycine 149–tryptophan 151 coordinates NAD(+). Residue lysine 161 is the Charge relay system of the active site. NAD(+) is bound by residues lysine 175–glutamate 178 and serine 228–threonine 231. Residue leucine 243 participates in K(+) binding. Glutamate 249 (proton acceptor) is an active-site residue. NAD(+) contacts are provided by glycine 251, cysteine 283, and glutamate 384. The Nucleophile role is filled by cysteine 283. The residue at position 283 (cysteine 283) is a Cysteine sulfenic acid (-SOH). Lysine 454 and glycine 457 together coordinate K(+). Glutamate 461 acts as the Charge relay system in catalysis.

Belongs to the aldehyde dehydrogenase family. Dimer of dimers. It depends on K(+) as a cofactor.

The catalysed reaction is betaine aldehyde + NAD(+) + H2O = glycine betaine + NADH + 2 H(+). Its pathway is amine and polyamine biosynthesis; betaine biosynthesis via choline pathway; betaine from betaine aldehyde: step 1/1. Its function is as follows. Involved in the biosynthesis of the osmoprotectant glycine betaine. Catalyzes the irreversible oxidation of betaine aldehyde to the corresponding acid. The chain is Betaine aldehyde dehydrogenase from Brucella canis (strain ATCC 23365 / NCTC 10854 / RM-666).